A 575-amino-acid chain; its full sequence is Flagellin B (575 aa).

Belongs to the bacterial flagellin family. As to quaternary structure, heteromer of flaA and flaB.

It is found in the secreted. It localises to the bacterial flagellum. Its function is as follows. Flagellin is the subunit protein which polymerizes to form the filaments of bacterial flagella. The chain is Flagellin B (flaB) from Campylobacter jejuni.